Here is a 123-residue protein sequence, read N- to C-terminus: Large ribosomal subunit protein uL29y (123 aa).

This sequence belongs to the universal ribosomal protein uL29 family.

In Arabidopsis thaliana (Mouse-ear cress), this protein is Large ribosomal subunit protein uL29y (RPL35B).